We begin with the raw amino-acid sequence, 392 residues long: MWTALVLVWISSVLLPRSHMMSAEPRNIVTNKWPKAVNQSMLRDTVPRTDNTFTERTAIVPPAPVTLTTETWAATLNSTRVTAEVTTHGTNTSTPTTREGTTDRVTSRTLAVPTSSGPSSAEQTRPTTIAGLPSLSTPHAEVPRTNASVSPRTAMAATVAPHTATLAAGTVNTSDPHTRTPSPAKSTPTDTSSKNPIPTSGAQIQGTTVQLTTDQPVHSTAGRSALSPSNATLEPTTTQVQTKEPSASTVPARATSLSPDVDVISPTTQPSPTLPTQGTGGPGTLLTTEQVGTKTTSGTASAGPTSRSSGDIKVPTTDSCQPSTQGQYLVTIDALTPSLVNKMLLLVVLLVGVTLFIAVLVMFALQAYESYKKKDYTQVDYLINGMYADSEM.

An N-terminal signal peptide occupies residues 1-23 (MWTALVLVWISSVLLPRSHMMSA). Over 24–342 (EPRNIVTNKW…DALTPSLVNK (319 aa)) the chain is Extracellular. A glycan (N-linked (GlcNAc...) asparagine) is linked at asparagine 77. Disordered stretches follow at residues 83-154 (AEVT…PRTA) and 167-320 (AAGT…TDSC). The span at 86–97 (TTHGTNTSTPTT) shows a compositional bias: low complexity. Composition is skewed to polar residues over residues 107 to 127 (SRTL…TRPT) and 170 to 249 (TVNT…SAST). The N-linked (GlcNAc...) asparagine glycan is linked to asparagine 172. 2 stretches are compositionally biased toward low complexity: residues 265–277 (SPTT…LPTQ) and 284–309 (TLLT…SRSS). Residues 343 to 363 (MLLLVVLLVGVTLFIAVLVMF) traverse the membrane as a helical segment. Residues 364–392 (ALQAYESYKKKDYTQVDYLINGMYADSEM) are Cytoplasmic-facing.

It is found in the cell membrane. The protein resides in the golgi apparatus. It localises to the trans-Golgi network membrane. This is an uncharacterized protein from Mus musculus (Mouse).